A 436-amino-acid chain; its full sequence is Ribulose bisphosphate carboxylase large chain (436 aa).

Position 4 is an N6,N6,N6-trimethyllysine (Lys4). Residues Asn113 and Thr163 each contribute to the substrate site. The active-site Proton acceptor is the Lys165. Lys167 provides a ligand contact to substrate. Lys191, Asp193, and Glu194 together coordinate Mg(2+). Lys191 is modified (N6-carboxylysine). The active-site Proton acceptor is His284. 3 residues coordinate substrate: Arg285, His317, and Ser369.

The protein belongs to the RuBisCO large chain family. Type I subfamily. Heterohexadecamer of 8 large chains and 8 small chains; disulfide-linked. The disulfide link is formed within the large subunit homodimers. Mg(2+) serves as cofactor. The disulfide bond which can form in the large chain dimeric partners within the hexadecamer appears to be associated with oxidative stress and protein turnover.

The protein localises to the plastid. It is found in the chloroplast. The enzyme catalyses 2 (2R)-3-phosphoglycerate + 2 H(+) = D-ribulose 1,5-bisphosphate + CO2 + H2O. It catalyses the reaction D-ribulose 1,5-bisphosphate + O2 = 2-phosphoglycolate + (2R)-3-phosphoglycerate + 2 H(+). In terms of biological role, ruBisCO catalyzes two reactions: the carboxylation of D-ribulose 1,5-bisphosphate, the primary event in carbon dioxide fixation, as well as the oxidative fragmentation of the pentose substrate in the photorespiration process. Both reactions occur simultaneously and in competition at the same active site. The protein is Ribulose bisphosphate carboxylase large chain of Sanguinaria canadensis (Bloodroot).